The following is a 158-amino-acid chain: Lysozyme C (158 aa).

The signal sequence occupies residues 1–18; the sequence is MRVLPLALLVGLLAVSDA. The C-type lysozyme domain occupies 19–150; the sequence is KVLGKCEFAR…DQYMAECWSR (132 aa). Intrachain disulfides connect cysteine 24–cysteine 147, cysteine 46–cysteine 135, cysteine 80–cysteine 93, and cysteine 89–cysteine 107. Residues glutamate 51 and aspartate 68 contribute to the active site.

It belongs to the glycosyl hydrolase 22 family. In terms of assembly, monomer. As to expression, strongly expressed in gill and gonad, and marginally detectable in hemolymph and lymphoid organ. Not expressed in kidney, hepatopancreas or tail muscle.

It is found in the secreted. The enzyme catalyses Hydrolysis of (1-&gt;4)-beta-linkages between N-acetylmuramic acid and N-acetyl-D-glucosamine residues in a peptidoglycan and between N-acetyl-D-glucosamine residues in chitodextrins.. Its function is as follows. Lysozymes have primarily a bacteriolytic function; those in tissues and body fluids are associated with the monocyte-macrophage system and enhance the activity of immunoagents. Has bacteriolytic activity against Gram-positive bacterium M.luteus, and Gram-negative shrimp pathogenic bacteria V.alginolyticus, V.parahaemolyticus and V.vulnificus. May play a role in host defense. The sequence is that of Lysozyme C from Penaeus merguiensis (Banana prawn).